The primary structure comprises 333 residues: Trimethylamine N-oxide-binding protein (333 aa).

The first 42 residues, 1 to 42, serve as a signal peptide directing secretion; the sequence is MRLFREIAANDPGPTGRMKNMKTFTTALATGVLALCPLAALA. Residues tryptophan 55, tryptophan 102, glutamate 131, tryptophan 177, and tryptophan 222 each contribute to the trimethylamine N-oxide site. The Ca(2+) site is built by proline 249, valine 251, asparagine 254, alanine 257, and aspartate 260.

As to quaternary structure, the complex is probably composed of two ATP-binding proteins (TmoW), two transmembrane proteins (TmoV) and a solute-binding protein (TmoX). Monomer in solution, but forms homodimers in crystals.

It localises to the periplasm. Its activity is regulated as follows. Binds a Ca(2+) ion, which has little effect on either the binding affinity or the secondary structure, but plays an important role in maintaining the stability of TmoX. It may modulate the protein stability in response to biological needs and environmental changes. Thermostability is dramatically decreased when Ca(2+) is removed by EDTA. Functionally, part of the ABC transporter complex TmoXWV involved in trimethylamine N-oxide (TMAO) import. Is specific for TMAO and essential for TMAO metabolism. Binds TMAO with high affinity. In vitro, also presents a high binding affinity for choline, however this transporter seems specific for TMAO and the choline-binding affinity presented by recombinant TmoX may not make physiological sense. This Ruegeria pomeroyi (strain ATCC 700808 / DSM 15171 / DSS-3) (Silicibacter pomeroyi) protein is Trimethylamine N-oxide-binding protein.